The sequence spans 513 residues: Zinc finger CCCH-type with G patch domain-containing protein (513 aa).

The C3H1-type zinc-finger motif lies at 155-178 (PCSYYLEGECRFDEAKCRFSHGAL). 2 stretches are compositionally biased toward acidic residues: residues 252-261 (DQDEDDELSS) and 273-283 (SDEAESDMDDL). The tract at residues 252-283 (DQDEDDELSSEESTSSMRDASSDEAESDMDDL) is disordered. Residues 312 to 358 (TRGIGSKLMEKMGYIHGTGLGSEGRGIVTPVSAQILPQGRSLDACME) form the G-patch domain. 2 disordered regions span residues 411–430 (PGESTQQSEQVAKKAKNNEL) and 477–513 (QVQMQSHKQELATLQAQERSLSKEQQTRKSKNKMFEF). The segment covering 477-495 (QVQMQSHKQELATLQAQER) has biased composition (polar residues). Basic and acidic residues predominate over residues 496-513 (SLSKEQQTRKSKNKMFEF).

It is found in the nucleus. Transcription repressor. In Drosophila sechellia (Fruit fly), this protein is Zinc finger CCCH-type with G patch domain-containing protein.